Here is a 75-residue protein sequence, read N- to C-terminus: Dermaseptin-S11 (75 aa).

An N-terminal signal peptide occupies residues 1–22; sequence MAFLKKSLFLVLFLGMVSLSIC. Residues 23-45 constitute a propeptide that is removed on maturation; that stretch reads EEEKRENEDEEEQEDDEQSEEKR. Positions 25-44 are disordered; the sequence is EKRENEDEEEQEDDEQSEEK. Residues 30–41 are compositionally biased toward acidic residues; that stretch reads EDEEEQEDDEQS.

This sequence belongs to the frog skin active peptide (FSAP) family. Dermaseptin subfamily. Expressed by the skin glands.

It localises to the secreted. The protein resides in the target cell membrane. Functionally, antimicrobial peptide with activity against Gram-positive and Gram-negative bacteria, and fungi. Has hemolytic activity. This is Dermaseptin-S11 from Phyllomedusa sauvagei (Sauvage's leaf frog).